The primary structure comprises 976 residues: Leucine--tRNA ligase (976 aa).

The span at 1–23 shows a compositional bias: low complexity; sequence MTESPTTTPGSTSGAPSGVPSGV. A disordered region spans residues 1–34; the sequence is MTESPTTTPGSTSGAPSGVPSGVNDAESDAPRHR. Positions 86-97 match the 'HIGH' region motif; sequence PYPSGEGLHVGH. The 'KMSKS' region motif lies at 745–749; that stretch reads KIGKS. K748 lines the ATP pocket.

The protein belongs to the class-I aminoacyl-tRNA synthetase family.

It is found in the cytoplasm. It carries out the reaction tRNA(Leu) + L-leucine + ATP = L-leucyl-tRNA(Leu) + AMP + diphosphate. The polypeptide is Leucine--tRNA ligase (Mycobacterium marinum (strain ATCC BAA-535 / M)).